Reading from the N-terminus, the 459-residue chain is GTPase Der (459 aa).

EngA-type G domains are found at residues 3–169 (PLVA…PPKE) and 183–358 (IRLA…DQFR). GTP is bound by residues 9–16 (GRPNVGKS), 56–60 (DTGGF), 119–122 (NKLD), 189–196 (GRPNVGKS), 236–240 (DTAGI), and 301–304 (NKWD). A KH-like domain is found at 359–442 (FRAPTPQLNR…PIRLIFKGRP (84 aa)).

The protein belongs to the TRAFAC class TrmE-Era-EngA-EngB-Septin-like GTPase superfamily. EngA (Der) GTPase family. Associates with the 50S ribosomal subunit.

Functionally, GTPase that plays an essential role in the late steps of ribosome biogenesis. The polypeptide is GTPase Der (Myxococcus xanthus (strain DK1622)).